Consider the following 276-residue polypeptide: Diaminopimelate epimerase (276 aa).

Residues asparagine 13, glutamine 46, and asparagine 66 each contribute to the substrate site. Residue cysteine 75 is the Proton donor of the active site. Residues glycine 76–asparagine 77, asparagine 159, asparagine 192, and glutamate 210–arginine 211 contribute to the substrate site. Cysteine 219 serves as the catalytic Proton acceptor. Residue glycine 220 to serine 221 participates in substrate binding.

Belongs to the diaminopimelate epimerase family. In terms of assembly, homodimer.

Its subcellular location is the cytoplasm. It carries out the reaction (2S,6S)-2,6-diaminopimelate = meso-2,6-diaminopimelate. It participates in amino-acid biosynthesis; L-lysine biosynthesis via DAP pathway; DL-2,6-diaminopimelate from LL-2,6-diaminopimelate: step 1/1. Its function is as follows. Catalyzes the stereoinversion of LL-2,6-diaminopimelate (L,L-DAP) to meso-diaminopimelate (meso-DAP), a precursor of L-lysine and an essential component of the bacterial peptidoglycan. The protein is Diaminopimelate epimerase of Vibrio parahaemolyticus serotype O3:K6 (strain RIMD 2210633).